The chain runs to 540 residues: Chaperonin GroEL 4 (540 aa).

ATP contacts are provided by residues 29–32 (TLGP), 86–90 (DGTTT), G413, 477–479 (NAA), and D493.

The protein belongs to the chaperonin (HSP60) family. In terms of assembly, forms a cylinder of 14 subunits composed of two heptameric rings stacked back-to-back. Interacts with the co-chaperonin GroES.

The protein resides in the cytoplasm. It carries out the reaction ATP + H2O + a folded polypeptide = ADP + phosphate + an unfolded polypeptide.. Its function is as follows. Together with its co-chaperonin GroES, plays an essential role in assisting protein folding. The GroEL-GroES system forms a nano-cage that allows encapsulation of the non-native substrate proteins and provides a physical environment optimized to promote and accelerate protein folding. This chain is Chaperonin GroEL 4, found in Frankia alni (strain DSM 45986 / CECT 9034 / ACN14a).